The sequence spans 216 residues: Ribosomal RNA small subunit methyltransferase G (216 aa).

Residues Gly-83, Met-88, Val-134–Glu-135, and Arg-149 each bind S-adenosyl-L-methionine.

This sequence belongs to the methyltransferase superfamily. RNA methyltransferase RsmG family.

The protein localises to the cytoplasm. The enzyme catalyses guanosine(527) in 16S rRNA + S-adenosyl-L-methionine = N(7)-methylguanosine(527) in 16S rRNA + S-adenosyl-L-homocysteine. In terms of biological role, specifically methylates the N7 position of guanine in position 527 of 16S rRNA. This is Ribosomal RNA small subunit methyltransferase G from Pseudomonas putida (strain ATCC 700007 / DSM 6899 / JCM 31910 / BCRC 17059 / LMG 24140 / F1).